The following is a 99-amino-acid chain: MKIAEEPSPSLGQTLEWLRKELSEMQIQDQSLLLTLRHLHSVLEELRADSAHWEDARSSGGTSPIRARAGSEGRGCQPVCSRGLAQLLRGEDSRRSSLP.

Positions 50–77 (SAHWEDARSSGGTSPIRARAGSEGRGCQ) are disordered.

This is an uncharacterized protein from Homo sapiens (Human).